A 719-amino-acid polypeptide reads, in one-letter code: Polyribonucleotide nucleotidyltransferase (719 aa).

Mg(2+) contacts are provided by Asp-487 and Asp-493. A KH domain is found at 554-613 (PRIETFKIATDKIREVIGTGGKVIREIVEKTGAKVNIEDDGTVKVASSDGEAMKAAIKWI). The region spanning 623 to 691 (GQIYDGTVVK…DRGKTRLSMK (69 aa)) is the S1 motif domain. Positions 691-719 (KVVDQTTGEDLEAKQKDAPAEAPREAAGE) are disordered. Residues 701 to 719 (LEAKQKDAPAEAPREAAGE) are compositionally biased toward basic and acidic residues.

This sequence belongs to the polyribonucleotide nucleotidyltransferase family. The cofactor is Mg(2+).

The protein resides in the cytoplasm. It catalyses the reaction RNA(n+1) + phosphate = RNA(n) + a ribonucleoside 5'-diphosphate. In terms of biological role, involved in mRNA degradation. Catalyzes the phosphorolysis of single-stranded polyribonucleotides processively in the 3'- to 5'-direction. The polypeptide is Polyribonucleotide nucleotidyltransferase (Bradyrhizobium sp. (strain ORS 278)).